A 247-amino-acid polypeptide reads, in one-letter code: Cell division protein ZapD (247 aa).

This sequence belongs to the ZapD family. In terms of assembly, interacts with FtsZ.

The protein localises to the cytoplasm. Functionally, cell division factor that enhances FtsZ-ring assembly. Directly interacts with FtsZ and promotes bundling of FtsZ protofilaments, with a reduction in FtsZ GTPase activity. This chain is Cell division protein ZapD, found in Salmonella dublin (strain CT_02021853).